The sequence spans 102 residues: MTIGLGHYLAVAAMLFTLGILGIFLNRKNIIVILMSVELILLAVNINLVAFSTFLGDIVGQVFALLVLTVAAAEAAIGLAVLVVYFRNRGSIAVEDVNLMKG.

The next 3 helical transmembrane spans lie at 5–25 (LGHY…GIFL), 30–50 (IIVI…NLVA), and 62–82 (VFAL…LAVL).

This sequence belongs to the complex I subunit 4L family. NDH-1 is composed of 14 different subunits. Subunits NuoA, H, J, K, L, M, N constitute the membrane sector of the complex.

It localises to the cell inner membrane. It carries out the reaction a quinone + NADH + 5 H(+)(in) = a quinol + NAD(+) + 4 H(+)(out). Functionally, NDH-1 shuttles electrons from NADH, via FMN and iron-sulfur (Fe-S) centers, to quinones in the respiratory chain. The immediate electron acceptor for the enzyme in this species is believed to be ubiquinone. Couples the redox reaction to proton translocation (for every two electrons transferred, four hydrogen ions are translocated across the cytoplasmic membrane), and thus conserves the redox energy in a proton gradient. This is NADH-quinone oxidoreductase subunit K from Bradyrhizobium sp. (strain BTAi1 / ATCC BAA-1182).